We begin with the raw amino-acid sequence, 57 residues long: uncharacterized protein (57 aa).

Residues Phe-4–His-26 traverse the membrane as a helical segment.

It is found in the membrane. This is an uncharacterized protein from Saccharomyces cerevisiae (strain ATCC 204508 / S288c) (Baker's yeast).